A 391-amino-acid chain; its full sequence is S-adenosylmethionine synthase (391 aa).

Residue His-14 participates in ATP binding. Asp-16 provides a ligand contact to Mg(2+). Glu-42 serves as a coordination point for K(+). 2 residues coordinate L-methionine: Glu-55 and Gln-98. Residues 98-108 (QSADIAMGVDE) are flexible loop. ATP contacts are provided by residues 172 to 174 (DGK), 238 to 239 (RF), Asp-247, 253 to 254 (RK), Ala-270, and Lys-274. Asp-247 is an L-methionine binding site. Lys-278 contacts L-methionine.

It belongs to the AdoMet synthase family. As to quaternary structure, homotetramer; dimer of dimers. Requires Mg(2+) as cofactor. The cofactor is K(+).

It localises to the cytoplasm. It catalyses the reaction L-methionine + ATP + H2O = S-adenosyl-L-methionine + phosphate + diphosphate. The protein operates within amino-acid biosynthesis; S-adenosyl-L-methionine biosynthesis; S-adenosyl-L-methionine from L-methionine: step 1/1. Functionally, catalyzes the formation of S-adenosylmethionine (AdoMet) from methionine and ATP. The overall synthetic reaction is composed of two sequential steps, AdoMet formation and the subsequent tripolyphosphate hydrolysis which occurs prior to release of AdoMet from the enzyme. This Clostridium acetobutylicum (strain ATCC 824 / DSM 792 / JCM 1419 / IAM 19013 / LMG 5710 / NBRC 13948 / NRRL B-527 / VKM B-1787 / 2291 / W) protein is S-adenosylmethionine synthase.